A 58-amino-acid polypeptide reads, in one-letter code: uncharacterized protein (58 aa).

Residues 23-51 (TTTSTSTTTTSTTTSTTTSTTTTTTTTTT) show a composition bias toward low complexity. The disordered stretch occupies residues 23–58 (TTTSTSTTTTSTTTSTTTSTTTTTTTTTTKDFNTET).

This is an uncharacterized protein from Dictyostelium discoideum (Social amoeba).